The following is a 132-amino-acid chain: Small ribosomal subunit protein eS17B (132 aa).

Phosphoserine is present on serine 43.

This sequence belongs to the eukaryotic ribosomal protein eS17 family. Component of the small ribosomal subunit (SSU). Mature yeast ribosomes consist of a small (40S) and a large (60S) subunit. The 40S small subunit contains 1 molecule of ribosomal RNA (18S rRNA) and at least 33 different proteins. The large 60S subunit contains 3 rRNA molecules (25S, 5.8S and 5S rRNA) and at least 46 different proteins.

Its subcellular location is the cytoplasm. In terms of biological role, component of the ribosome, a large ribonucleoprotein complex responsible for the synthesis of proteins in the cell. The small ribosomal subunit (SSU) binds messenger RNAs (mRNAs) and translates the encoded message by selecting cognate aminoacyl-transfer RNA (tRNA) molecules. The large subunit (LSU) contains the ribosomal catalytic site termed the peptidyl transferase center (PTC), which catalyzes the formation of peptide bonds, thereby polymerizing the amino acids delivered by tRNAs into a polypeptide chain. The nascent polypeptides leave the ribosome through a tunnel in the LSU and interact with protein factors that function in enzymatic processing, targeting, and the membrane insertion of nascent chains at the exit of the ribosomal tunnel. The polypeptide is Small ribosomal subunit protein eS17B (rps1702) (Schizosaccharomyces pombe (strain 972 / ATCC 24843) (Fission yeast)).